Reading from the N-terminus, the 222-residue chain is Protein-L-isoaspartate O-methyltransferase (222 aa).

Residue S70 is part of the active site.

Belongs to the methyltransferase superfamily. L-isoaspartyl/D-aspartyl protein methyltransferase family.

Its subcellular location is the cytoplasm. The enzyme catalyses [protein]-L-isoaspartate + S-adenosyl-L-methionine = [protein]-L-isoaspartate alpha-methyl ester + S-adenosyl-L-homocysteine. In terms of biological role, catalyzes the methyl esterification of L-isoaspartyl residues in peptides and proteins that result from spontaneous decomposition of normal L-aspartyl and L-asparaginyl residues. It plays a role in the repair and/or degradation of damaged proteins. The sequence is that of Protein-L-isoaspartate O-methyltransferase from Jannaschia sp. (strain CCS1).